The following is a 240-amino-acid chain: RxLR effector protein PexRD20 (240 aa).

Residues 1–23 (MRCHYFVLLAVAAFLAGANVAVA) form the signal peptide. The short motif at 43-58 (RALRSHTKATDHGEER) is the RxLR-dEER element.

Belongs to the RxLR effector family.

Its subcellular location is the secreted. The protein resides in the host cytoplasm. The protein localises to the host nucleus. It localises to the host nucleolus. Its function is as follows. Effector that enhances P.infestans colonization of Nicotiana benthamiana leaves. The protein is RxLR effector protein PexRD20 of Phytophthora infestans (strain T30-4) (Potato late blight agent).